The primary structure comprises 368 residues: NAD(P)H-quinone oxidoreductase subunit 1, chloroplastic (368 aa).

A run of 9 helical transmembrane segments spans residues 11–31 (RVIN…LIWI), 33–53 (IYIL…VWLE), 98–118 (WLFS…YLVI), 131–151 (IGVF…LMAG), 177–197 (LALC…VDIV), 205–225 (FWGW…ISSL), 255–275 (FGLF…FVTI), 305–325 (VLGI…FLFI), and 348–368 (FLLP…LLLL).

It belongs to the complex I subunit 1 family. NDH is composed of at least 16 different subunits, 5 of which are encoded in the nucleus.

It is found in the plastid. The protein resides in the chloroplast thylakoid membrane. It carries out the reaction a plastoquinone + NADH + (n+1) H(+)(in) = a plastoquinol + NAD(+) + n H(+)(out). The enzyme catalyses a plastoquinone + NADPH + (n+1) H(+)(in) = a plastoquinol + NADP(+) + n H(+)(out). Its function is as follows. NDH shuttles electrons from NAD(P)H:plastoquinone, via FMN and iron-sulfur (Fe-S) centers, to quinones in the photosynthetic chain and possibly in a chloroplast respiratory chain. The immediate electron acceptor for the enzyme in this species is believed to be plastoquinone. Couples the redox reaction to proton translocation, and thus conserves the redox energy in a proton gradient. In Cycas taitungensis (Prince sago), this protein is NAD(P)H-quinone oxidoreductase subunit 1, chloroplastic.